We begin with the raw amino-acid sequence, 133 residues long: Norrin (133 aa).

Positions 1–24 are cleaved as a signal peptide; that stretch reads MRKHVLAASFSMLSLLVIMGDTDS. Disulfide bonds link Cys-39–Cys-96, Cys-55–Cys-110, Cys-65–Cys-126, and Cys-69–Cys-128. A CTCK domain is found at 39–132; that stretch reads CMRHHYVDSI…ILSCHCEECN (94 aa).

Homodimer; disulfide-linked. Component of a complex, at least composed of TSPAN12, FZD4, LRP5/6 and norrin (NDP). Binds FZD4 with high affinity. Interacts with LRP6 (via Beta-propellers 1 and 2). As to expression, expressed in the outer nuclear, inner nuclear and ganglion cell layers of the retina, and in fetal and adult brain.

The protein resides in the secreted. In terms of biological role, activates the canonical Wnt signaling pathway through FZD4 and LRP5 coreceptor. Plays a central role in retinal vascularization by acting as a ligand for FZD4 that signals via stabilizing beta-catenin (CTNNB1) and activating LEF/TCF-mediated transcriptional programs. Acts in concert with TSPAN12 to activate FZD4 independently of the Wnt-dependent activation of FZD4, suggesting the existence of a Wnt-independent signaling that also promote accumulation the beta-catenin (CTNNB1). May be involved in a pathway that regulates neural cell differentiation and proliferation. Possible role in neuroectodermal cell-cell interaction. This Homo sapiens (Human) protein is Norrin (NDP).